The sequence spans 277 residues: Inhibition of morphological differentiation protein (277 aa).

Mg(2+)-binding residues include Asp18, Asp20, and Asp192.

This sequence belongs to the HAD-like hydrolase superfamily. SerB family.

The polypeptide is Inhibition of morphological differentiation protein (Streptomyces azureus).